We begin with the raw amino-acid sequence, 283 residues long: tRNA-cytidine(32) 2-sulfurtransferase (283 aa).

The PP-loop motif motif lies at 37–42 (SGGKDS). [4Fe-4S] cluster-binding residues include cysteine 112, cysteine 115, and cysteine 203.

It belongs to the TtcA family. In terms of assembly, homodimer. Mg(2+) serves as cofactor. [4Fe-4S] cluster is required as a cofactor.

It is found in the cytoplasm. It carries out the reaction cytidine(32) in tRNA + S-sulfanyl-L-cysteinyl-[cysteine desulfurase] + AH2 + ATP = 2-thiocytidine(32) in tRNA + L-cysteinyl-[cysteine desulfurase] + A + AMP + diphosphate + H(+). The protein operates within tRNA modification. In terms of biological role, catalyzes the ATP-dependent 2-thiolation of cytidine in position 32 of tRNA, to form 2-thiocytidine (s(2)C32). The sulfur atoms are provided by the cysteine/cysteine desulfurase (IscS) system. The chain is tRNA-cytidine(32) 2-sulfurtransferase from Legionella pneumophila subsp. pneumophila (strain Philadelphia 1 / ATCC 33152 / DSM 7513).